Here is a 115-residue protein sequence, read N- to C-terminus: ER exit protein (115 aa).

It belongs to the STEEP1 family.

May stimulate membrane curvature formation and subsequent endoplasmic reticulum exit site (ERES) establishment. This is ER exit protein from Schizosaccharomyces pombe (strain 972 / ATCC 24843) (Fission yeast).